A 278-amino-acid chain; its full sequence is Elongation factor Ts (278 aa).

Residues 80–83 (TDFV) form an involved in Mg(2+) ion dislocation from EF-Tu region.

Belongs to the EF-Ts family.

The protein localises to the cytoplasm. Its function is as follows. Associates with the EF-Tu.GDP complex and induces the exchange of GDP to GTP. It remains bound to the aminoacyl-tRNA.EF-Tu.GTP complex up to the GTP hydrolysis stage on the ribosome. The sequence is that of Elongation factor Ts from Micrococcus luteus (strain ATCC 4698 / DSM 20030 / JCM 1464 / CCM 169 / CCUG 5858 / IAM 1056 / NBRC 3333 / NCIMB 9278 / NCTC 2665 / VKM Ac-2230) (Micrococcus lysodeikticus).